Reading from the N-terminus, the 417-residue chain is Serine hydroxymethyltransferase (417 aa).

(6S)-5,6,7,8-tetrahydrofolate contacts are provided by residues leucine 121 and 125–127; that span reads GHL. Lysine 229 carries the post-translational modification N6-(pyridoxal phosphate)lysine. 355 to 357 is a (6S)-5,6,7,8-tetrahydrofolate binding site; it reads SPF.

It belongs to the SHMT family. Homodimer. Requires pyridoxal 5'-phosphate as cofactor.

The protein localises to the cytoplasm. The enzyme catalyses (6R)-5,10-methylene-5,6,7,8-tetrahydrofolate + glycine + H2O = (6S)-5,6,7,8-tetrahydrofolate + L-serine. Its pathway is one-carbon metabolism; tetrahydrofolate interconversion. It participates in amino-acid biosynthesis; glycine biosynthesis; glycine from L-serine: step 1/1. Catalyzes the reversible interconversion of serine and glycine with tetrahydrofolate (THF) serving as the one-carbon carrier. This reaction serves as the major source of one-carbon groups required for the biosynthesis of purines, thymidylate, methionine, and other important biomolecules. Also exhibits THF-independent aldolase activity toward beta-hydroxyamino acids, producing glycine and aldehydes, via a retro-aldol mechanism. This Xanthomonas axonopodis pv. citri (strain 306) protein is Serine hydroxymethyltransferase.